A 256-amino-acid polypeptide reads, in one-letter code: 5-keto-4-deoxy-D-glucarate aldolase (256 aa).

Histidine 50 serves as the catalytic Proton acceptor. Residue glutamine 151 coordinates substrate. Residue glutamate 153 coordinates Mg(2+). Serine 178 and aspartate 179 together coordinate substrate. Aspartate 179 contacts Mg(2+).

This sequence belongs to the HpcH/HpaI aldolase family. KDGluc aldolase subfamily. Homohexamer; trimer of dimers. Mg(2+) serves as cofactor.

The catalysed reaction is 5-dehydro-4-deoxy-D-glucarate = 2-hydroxy-3-oxopropanoate + pyruvate. It carries out the reaction 2-dehydro-3-deoxy-D-glucarate = 2-hydroxy-3-oxopropanoate + pyruvate. Its pathway is carbohydrate acid metabolism; galactarate degradation; D-glycerate from galactarate: step 2/3. In terms of biological role, catalyzes the reversible retro-aldol cleavage of both 5-keto-4-deoxy-D-glucarate and 2-keto-3-deoxy-D-glucarate to pyruvate and tartronic semialdehyde. The chain is 5-keto-4-deoxy-D-glucarate aldolase from Shigella boydii serotype 4 (strain Sb227).